Here is a 197-residue protein sequence, read N- to C-terminus: MLLGGKDKKGSLFIVSAPAGTGKTTLVNLLVQEFPTVIASISYTTRAPRLGEVNGKDYYFITESEFEAKIAAADFLEYVKLYDTYYGTSREWVEIQRQLGLHVILVIDTQGALQLQKLCEATFIFIRPPSLDELKNRLINRQTESLEMIEKRLACAERELEAAQYYDYEIINDDLQEAYQVLRSILIAEYHRISKKL.

Positions 10 to 187 constitute a Guanylate kinase-like domain; it reads GSLFIVSAPA…AYQVLRSILI (178 aa). 17-24 lines the ATP pocket; sequence APAGTGKT.

This sequence belongs to the guanylate kinase family.

Its subcellular location is the cytoplasm. The enzyme catalyses GMP + ATP = GDP + ADP. Functionally, essential for recycling GMP and indirectly, cGMP. The polypeptide is Guanylate kinase (Protochlamydia amoebophila (strain UWE25)).